Consider the following 137-residue polypeptide: Large ribosomal subunit protein uL16 (137 aa).

The protein belongs to the universal ribosomal protein uL16 family. Part of the 50S ribosomal subunit.

Binds 23S rRNA and is also seen to make contacts with the A and possibly P site tRNAs. The protein is Large ribosomal subunit protein uL16 of Pseudomonas fluorescens (strain Pf0-1).